Here is a 453-residue protein sequence, read N- to C-terminus: tRNA modification GTPase MnmE (453 aa).

(6S)-5-formyl-5,6,7,8-tetrahydrofolate is bound by residues R22, E79, and K119. Residues 215 to 376 enclose the TrmE-type G domain; that stretch reads GMKVVIAGRP…LKQHLKSLMG (162 aa). A K(+)-binding site is contributed by N225. GTP-binding positions include 225–230, 244–250, 269–272, and 334–337; these read NAGKSS, TEIAGTT, DTAG, and NKAD. Residue S229 coordinates Mg(2+). 3 residues coordinate K(+): T244, I246, and T249. T250 provides a ligand contact to Mg(2+). K453 lines the (6S)-5-formyl-5,6,7,8-tetrahydrofolate pocket.

This sequence belongs to the TRAFAC class TrmE-Era-EngA-EngB-Septin-like GTPase superfamily. TrmE GTPase family. Homodimer. Heterotetramer of two MnmE and two MnmG subunits. It depends on K(+) as a cofactor.

The protein localises to the cytoplasm. In terms of biological role, exhibits a very high intrinsic GTPase hydrolysis rate. Involved in the addition of a carboxymethylaminomethyl (cmnm) group at the wobble position (U34) of certain tRNAs, forming tRNA-cmnm(5)s(2)U34. This chain is tRNA modification GTPase MnmE, found in Shewanella baltica (strain OS195).